An 827-amino-acid polypeptide reads, in one-letter code: Endoribonuclease YSH1 (827 aa).

Residues H96, H98, D100, H101, H184, and D205 each coordinate Zn(2+). Residue H426 is the Proton donor of the active site. H448 is a Zn(2+) binding site. Over residues 583–592 the composition is skewed to acidic residues; the sequence is EDDVAEEEED. Disordered regions lie at residues 583 to 621 and 802 to 827; these read EDDV…KEEE and DREE…KEEE. The span at 606–621 shows a compositional bias: basic and acidic residues; sequence GEVKDETAEEVKKEEE.

Belongs to the metallo-beta-lactamase superfamily. RNA-metabolizing metallo-beta-lactamase-like family. CPSF2/YSH1 subfamily.

Its subcellular location is the nucleus. Functionally, component of the cleavage factor I (CF I) involved in pre-mRNA 3'-end processing. The sequence is that of Endoribonuclease YSH1 (YSH1) from Yarrowia lipolytica (strain CLIB 122 / E 150) (Yeast).